Consider the following 414-residue polypeptide: TBC domain-containing protein C1778.09 (414 aa).

The region spanning 158-343 (GIPDCWRSIA…RIWDLLFLLG (186 aa)) is the Rab-GAP TBC domain.

The protein resides in the cytoplasm. Its subcellular location is the nucleus. The polypeptide is TBC domain-containing protein C1778.09 (Schizosaccharomyces pombe (strain 972 / ATCC 24843) (Fission yeast)).